Consider the following 152-residue polypeptide: Large ribosomal subunit protein eL32 (152 aa).

Belongs to the eukaryotic ribosomal protein eL32 family.

The polypeptide is Large ribosomal subunit protein eL32 (rpl32e) (Pyrobaculum aerophilum (strain ATCC 51768 / DSM 7523 / JCM 9630 / CIP 104966 / NBRC 100827 / IM2)).